The following is a 72-amino-acid chain: GSGFVAVEIPFTPRVLELSLEEARVLENLGADPSNIRFQPVKVPEPSVDETIQILKFLPDKAIDLIDEAGSR.

The protein belongs to the ClpA/ClpB family.

It is found in the plastid. The protein localises to the chloroplast. In terms of biological role, may interact with a ClpP-like protease involved in degradation of denatured proteins in the chloroplast. The polypeptide is ATP-dependent Clp protease ATP-binding subunit ClpA homolog (Populus euphratica (Euphrates poplar)).